Consider the following 293-residue polypeptide: uncharacterized protein (293 aa).

The region spanning 1-58 (MELKQLITFITAAEHVNFTLTAKMLNYAQSSVTSQIKSLEEEIGTPLFERLGKRLILT) is the HTH lysR-type domain. The segment at residues 18 to 37 (FTLTAKMLNYAQSSVTSQIK) is a DNA-binding region (H-T-H motif).

The protein belongs to the LysR transcriptional regulatory family.

It localises to the cytoplasm. This is an uncharacterized protein from Bacillus subtilis (strain 168).